A 202-amino-acid polypeptide reads, in one-letter code: Oligoribonuclease (202 aa).

One can recognise an Exonuclease domain in the interval 2–166; it reads LVWIDCEMTG…ADIQESIEEL (165 aa). Tyrosine 123 is an active-site residue.

It belongs to the oligoribonuclease family.

It localises to the cytoplasm. Functionally, 3'-to-5' exoribonuclease specific for small oligoribonucleotides. This is Oligoribonuclease from Cutibacterium acnes (strain DSM 16379 / KPA171202) (Propionibacterium acnes).